The chain runs to 252 residues: Ubiquinone biosynthesis protein COQ4 homolog 2, mitochondrial (252 aa).

Zn(2+) is bound by residues His130, Asp131, His134, and Glu146.

Belongs to the COQ4 family. Component of a multi-subunit COQ enzyme complex. Zn(2+) serves as cofactor.

The protein localises to the mitochondrion inner membrane. The enzyme catalyses a 4-hydroxy-3-methoxy-5-(all-trans-polyprenyl)benzoate + H(+) = a 2-methoxy-6-(all-trans-polyprenyl)phenol + CO2. The protein operates within cofactor biosynthesis; ubiquinone biosynthesis. In terms of biological role, lyase that catalyzes the C1-decarboxylation of 4-hydroxy-3-methoxy-5-(all-trans-polyprenyl)benzoic acid into 2-methoxy-6-(all-trans-polyprenyl)phenol during ubiquinone biosynthesis. This chain is Ubiquinone biosynthesis protein COQ4 homolog 2, mitochondrial, found in Trypanosoma cruzi (strain CL Brener).